A 287-amino-acid chain; its full sequence is MKRIFLLIATNLAVLLVASIVMSILGVNTSTMGGLLVFAAIFGFGGAFISLAISKWMAKKTMGCEVITTPRDSTERWLLETVARQAQQAGIKMPEVAIYQSPEMNAFATGPSKDNSLVAVSTGLLYGMSQDEVEGVLAHEVSHVANGDMVTLTLIQGVVNTFVIFAARVVAGIINNFVSSNDEEGEGLGMFAYMAVVFVLDMLFGILASIIVAYFSRIREYRADEGAARLAGKHKMIAALERLRQGPESSAMPAQMSAFGINGKRSMAELMMSHPPLEKRIAALQTR.

The next 2 helical transmembrane spans lie at 4–24 (IFLL…VMSI) and 33–53 (GGLL…SLAI). A Zn(2+)-binding site is contributed by His139. Glu140 is an active-site residue. His143 serves as a coordination point for Zn(2+). 2 helical membrane passes run 154–174 (LIQG…AGII) and 195–215 (AVVF…VAYF). A Zn(2+)-binding site is contributed by Glu220.

Belongs to the peptidase M48B family. It depends on Zn(2+) as a cofactor.

It localises to the cell inner membrane. The sequence is that of Protease HtpX from Shewanella sp. (strain MR-4).